Here is a 320-residue protein sequence, read N- to C-terminus: Glycerol-3-phosphate dehydrogenase [NAD(P)+] (320 aa).

NADPH is bound by residues Phe-11, Arg-30, and Lys-102. Residues Lys-102, Gly-130, and Ser-132 each coordinate sn-glycerol 3-phosphate. Ala-134 contributes to the NADPH binding site. Sn-glycerol 3-phosphate is bound by residues Lys-185, Asp-238, Ser-248, Arg-249, and Asn-250. Catalysis depends on Lys-185, which acts as the Proton acceptor. Arg-249 is an NADPH binding site. Glu-270 contacts NADPH.

It belongs to the NAD-dependent glycerol-3-phosphate dehydrogenase family.

The protein resides in the cytoplasm. The catalysed reaction is sn-glycerol 3-phosphate + NAD(+) = dihydroxyacetone phosphate + NADH + H(+). The enzyme catalyses sn-glycerol 3-phosphate + NADP(+) = dihydroxyacetone phosphate + NADPH + H(+). The protein operates within membrane lipid metabolism; glycerophospholipid metabolism. Catalyzes the reduction of the glycolytic intermediate dihydroxyacetone phosphate (DHAP) to sn-glycerol 3-phosphate (G3P), the key precursor for phospholipid synthesis. This Roseobacter denitrificans (strain ATCC 33942 / OCh 114) (Erythrobacter sp. (strain OCh 114)) protein is Glycerol-3-phosphate dehydrogenase [NAD(P)+].